We begin with the raw amino-acid sequence, 358 residues long: Na(+)/H(+) exchange regulatory cofactor NHE-RF1 (358 aa).

At Ser2 the chain carries N-acetylserine. Residues Ser2 and Ser46 each carry the phosphoserine modification. Residues Leu14 to Glu94 form the PDZ 1 domain. Positions Gln114–Gly132 are enriched in low complexity. The interval Gln114–Gly192 is disordered. Basic and acidic residues predominate over residues Asn135–Pro152. The PDZ 2 domain maps to Leu154–Glu234. Residues Ser162, Ser269, Ser280, Ser290, and Ser291 each carry the phosphoserine modification. The interval Ala277–Leu358 is disordered. Polar residues predominate over residues Ser288–Gln306. A Phosphothreonine modification is found at Thr293. 3 positions are modified to phosphoserine: Ser294, Ser299, and Ser302. The segment covering Asp307–Pro319 has biased composition (low complexity). Residues Trp348–Leu358 are compositionally biased toward basic and acidic residues.

Homodimer, and heterodimer with NHERF2. Binds the N-termini of EZR, RDX and MSN. Binds the C-termini of PDGFRA, PDGFRB, ADRB2, NOS2 and CFTR. Binds ARHGAP17, EPI64, RACK1, OPRK1, GNAQ, CTNNB1 and PLCB3. Binds PDZK1. Interacts with CLCN3. Binds the C-terminus of PAG1. In resting T-cells, part of a PAG1-NHERF1-MSN complex which is disrupted upon TCR activation. Forms a complex with CFTR and SLC4A7. Forms a complex with SLC4A7 and ATP6V1B1. Interacts with TRPC4 (via the PDZ-binding domain). Directly interacts with HTR4. Interacts (via the PDZ 1 domain) with PODXL (via the C-terminal PDZ-binding motif DTHL); interaction is not detected in glomerular epithelium cells. Interacts (via the PDZ 1 domain) with PODXL (via the C-terminal PDZ-binding motif DTHL); the interaction take place early in the secretory pathway and is necessary for its apical membrane sorting. Interacts with SLC26A3. Interacts with MCC. Interacts with SLC34A1. Interacts (via the PDZ domains) with SLC26A6 isoform 4 and isoform 5. Interacts (via PDZ domains) with ACE2 (via PDZ-binding motif); the interaction may enhance ACE2 membrane residence. In terms of processing, phosphorylated on serine residues. Detected in liver, kidney, pancreas, prostate, spleen, small intestine and placenta, in particular in the syncytiotrophoblast.

The protein resides in the cytoplasm. The protein localises to the apical cell membrane. It is found in the endomembrane system. Its subcellular location is the cell projection. It localises to the filopodium. The protein resides in the ruffle. The protein localises to the microvillus. Functionally, scaffold protein that connects plasma membrane proteins with members of the ezrin/moesin/radixin family and thereby helps to link them to the actin cytoskeleton and to regulate their surface expression. Necessary for recycling of internalized ADRB2. Was first known to play a role in the regulation of the activity and subcellular location of SLC9A3. Necessary for cAMP-mediated phosphorylation and inhibition of SLC9A3. May enhance Wnt signaling. May participate in HTR4 targeting to microvilli. Involved in the regulation of phosphate reabsorption in the renal proximal tubules. Involved in sperm capacitation. May participate in the regulation of the chloride and bicarbonate homeostasis in spermatozoa. The protein is Na(+)/H(+) exchange regulatory cofactor NHE-RF1 of Homo sapiens (Human).